The primary structure comprises 201 residues: uncharacterized protein (201 aa).

Residues 11-31 (IWKSLYLLIIVGMLYIGYILI) form a helical membrane-spanning segment.

It is found in the membrane. This is an uncharacterized protein from Rickettsia prowazekii (strain Madrid E).